The following is a 226-amino-acid chain: MREPLDPLGPALAQASLYLCTDARRERGDLAEFADAALAGGVDLIQLRDKGSAGERRFGPLEAREELAALEILAEAARRRGALLAVNDRADIALAAGADVLHLGQDDLPLPVARRIIGPRPLIGRSTHDSAQVSAAVAEEVDYFCVGPCWPTPTKPGREAPGLGLVREVASRATEKPWFAIGGIDEARLPEVLDAGARRIVVVRAITAADDPKAAARRLKDALVSR.

Residues 46 to 50 (QLRDK) and Asn-87 each bind 4-amino-2-methyl-5-(diphosphooxymethyl)pyrimidine. Residues Asp-88 and Asp-107 each coordinate Mg(2+). Ser-126 serves as a coordination point for 4-amino-2-methyl-5-(diphosphooxymethyl)pyrimidine. Residue 152 to 154 (TPT) participates in 2-[(2R,5Z)-2-carboxy-4-methylthiazol-5(2H)-ylidene]ethyl phosphate binding. A 4-amino-2-methyl-5-(diphosphooxymethyl)pyrimidine-binding site is contributed by Lys-155. Gly-183 is a binding site for 2-[(2R,5Z)-2-carboxy-4-methylthiazol-5(2H)-ylidene]ethyl phosphate.

The protein belongs to the thiamine-phosphate synthase family. It depends on Mg(2+) as a cofactor.

The enzyme catalyses 2-[(2R,5Z)-2-carboxy-4-methylthiazol-5(2H)-ylidene]ethyl phosphate + 4-amino-2-methyl-5-(diphosphooxymethyl)pyrimidine + 2 H(+) = thiamine phosphate + CO2 + diphosphate. It carries out the reaction 2-(2-carboxy-4-methylthiazol-5-yl)ethyl phosphate + 4-amino-2-methyl-5-(diphosphooxymethyl)pyrimidine + 2 H(+) = thiamine phosphate + CO2 + diphosphate. The catalysed reaction is 4-methyl-5-(2-phosphooxyethyl)-thiazole + 4-amino-2-methyl-5-(diphosphooxymethyl)pyrimidine + H(+) = thiamine phosphate + diphosphate. It participates in cofactor biosynthesis; thiamine diphosphate biosynthesis; thiamine phosphate from 4-amino-2-methyl-5-diphosphomethylpyrimidine and 4-methyl-5-(2-phosphoethyl)-thiazole: step 1/1. Its function is as follows. Condenses 4-methyl-5-(beta-hydroxyethyl)thiazole monophosphate (THZ-P) and 2-methyl-4-amino-5-hydroxymethyl pyrimidine pyrophosphate (HMP-PP) to form thiamine monophosphate (TMP). This Mycobacterium sp. (strain JLS) protein is Thiamine-phosphate synthase.